Here is a 540-residue protein sequence, read N- to C-terminus: Glucose-6-phosphate isomerase (540 aa).

Residue E350 is the Proton donor of the active site. Active-site residues include H381 and K503.

It belongs to the GPI family.

It is found in the cytoplasm. It carries out the reaction alpha-D-glucose 6-phosphate = beta-D-fructose 6-phosphate. The protein operates within carbohydrate biosynthesis; gluconeogenesis. It functions in the pathway carbohydrate degradation; glycolysis; D-glyceraldehyde 3-phosphate and glycerone phosphate from D-glucose: step 2/4. Its function is as follows. Catalyzes the reversible isomerization of glucose-6-phosphate to fructose-6-phosphate. The sequence is that of Glucose-6-phosphate isomerase from Burkholderia mallei (strain NCTC 10247).